The primary structure comprises 147 residues: Mucoricin (147 aa).

Residues 4–143 (EEGRLFFIKS…VSANQRWELV (140 aa)) enclose the Ricin B-type lectin domain.

Belongs to the ribosome-inactivating protein family. Type 1 RIP subfamily.

Its subcellular location is the secreted. The catalysed reaction is Endohydrolysis of the N-glycosidic bond at one specific adenosine on the 28S rRNA.. In terms of biological role, N-glycosylase that inhibits protein synthesis in the host by depurinating ribosomal rRNA, and thus acts as a ribosomal inactivating protein (RIP). Promotes vascular permeability in the host and induces necrosis and apoptosis of host alveolar epithelial cells. The sequence is that of Mucoricin from Rhizopus delemar (strain RA 99-880 / ATCC MYA-4621 / FGSC 9543 / NRRL 43880) (Mucormycosis agent).